Consider the following 314-residue polypeptide: Olfactory receptor 5D14 (314 aa).

Topologically, residues 1–27 (MMMVLRNLSMEPTFALLGFTDYPKLQI) are extracellular. Asn-7 carries N-linked (GlcNAc...) asparagine glycosylation. Residues 28-48 (PLFLVFLLMYVITVVGNLGMI) form a helical membrane-spanning segment. Over 49-56 (IIIKINPK) the chain is Cytoplasmic. Residues 57 to 77 (FHTPMYFFLSHLSFVDFCYSS) form a helical membrane-spanning segment. Topologically, residues 78 to 101 (IVTPKLLENLVMADKSIFYFSCMM) are extracellular. A helical membrane pass occupies residues 102-122 (QYFLSCTAVVTESFLLAVMAY). At 123–141 (DRFVAICNPLLYTVAMSQR) the chain is on the cytoplasmic side. A helical membrane pass occupies residues 142 to 162 (LCALLVAGSYLWGMFGPLVLL). Topologically, residues 163-198 (CYALRLNFSGPNVINHFFCEYTALISVSGSDILIPH) are extracellular. N-linked (GlcNAc...) asparagine glycosylation is present at Asn-169. A helical membrane pass occupies residues 199-219 (LLLFSFATFNEMCTLLIILTS). Residues 220 to 239 (YVFIFVTVLKIRSVSGRHKA) are Cytoplasmic-facing. Residues 240-260 (FSTWASHLTSITIFHGTILFL) form a helical membrane-spanning segment. Topologically, residues 261–273 (YCVPNSKNSRQTV) are extracellular. Residues 274 to 294 (KVASVFYTVVNPMLNPLIYSL) form a helical membrane-spanning segment. Over 295-314 (RNKDVKDAFWKLIHTQVPFH) the chain is Cytoplasmic.

This sequence belongs to the G-protein coupled receptor 1 family.

It is found in the cell membrane. Functionally, odorant receptor. The polypeptide is Olfactory receptor 5D14 (OR5D14) (Homo sapiens (Human)).